The sequence spans 341 residues: Methionine import ATP-binding protein MetN 3 (341 aa).

One can recognise an ABC transporter domain in the interval 2–241 (ILLENVKKIY…PQQDITKRFV (240 aa)). ATP is bound at residue 38-45 (GYSGAGKS).

The protein belongs to the ABC transporter superfamily. Methionine importer (TC 3.A.1.24) family. In terms of assembly, the complex is composed of two ATP-binding proteins (MetN), two transmembrane proteins (MetI) and a solute-binding protein (MetQ).

The protein resides in the cell membrane. The enzyme catalyses L-methionine(out) + ATP + H2O = L-methionine(in) + ADP + phosphate + H(+). It carries out the reaction D-methionine(out) + ATP + H2O = D-methionine(in) + ADP + phosphate + H(+). Functionally, part of the ABC transporter complex MetNIQ involved in methionine import. Responsible for energy coupling to the transport system. The protein is Methionine import ATP-binding protein MetN 3 of Bacillus cereus (strain ZK / E33L).